Reading from the N-terminus, the 573-residue chain is E3 ubiquitin-protein ligase RNF168 (573 aa).

An RING-type zinc finger spans residues Cys-16–Arg-55. Ser-70 bears the Phosphoserine mark. Positions Leu-110 to Glu-128 match the LR motif 1 motif. The UMI motif motif lies at Glu-143 to Ala-151. 2 disordered regions span residues Glu-153–Ser-174 and Ala-196–Pro-277. A compositionally biased stretch (basic and acidic residues) spans Glu-157 to Ser-174. An MIU motif 1 motif is present at residues Met-168 to Glu-191. Ser-197 carries the phosphoserine modification. Lys-210 is covalently cross-linked (Glycyl lysine isopeptide (Lys-Gly) (interchain with G-Cter in SUMO2)). Polar residues predominate over residues Pro-231 to Val-243. Residues Gln-245 to Asp-261 show a composition bias toward basic and acidic residues. Position 363 is a phosphothreonine (Thr-363). At Ser-416 the chain carries Phosphoserine. The MIU motif 2 signature appears at Arg-440 to Met-463. The interval Glu-456 to Gln-528 is disordered. Residues Glu-461–Gly-470 show a composition bias toward basic and acidic residues. Residues Arg-467–Arg-478 carry the LR motif 2 motif. At Ser-471 the chain carries Phosphoserine. Over residues Asn-494 to Asn-519 the composition is skewed to basic and acidic residues. A Glycyl lysine isopeptide (Lys-Gly) (interchain with G-Cter in SUMO2) cross-link involves residue Lys-530. Residues Asn-540 to Lys-573 form a disordered region.

This sequence belongs to the RNF168 family. As to quaternary structure, monomer. Interacts with UBE2N/UBC13. In terms of processing, sumoylated with SUMO1 by PIAS4 in response to double-strand breaks (DSBs). Ubiquitinated.

The protein resides in the nucleus. It catalyses the reaction S-ubiquitinyl-[E2 ubiquitin-conjugating enzyme]-L-cysteine + [acceptor protein]-L-lysine = [E2 ubiquitin-conjugating enzyme]-L-cysteine + N(6)-ubiquitinyl-[acceptor protein]-L-lysine.. It participates in protein modification; protein ubiquitination. In terms of biological role, E3 ubiquitin-protein ligase required for accumulation of repair proteins to sites of DNA damage. Acts with UBE2N/UBC13 to amplify the RNF8-dependent histone ubiquitination. Recruited to sites of DNA damage at double-strand breaks (DSBs) by binding to ubiquitinated histone H2A and H2AX and amplifies the RNF8-dependent H2A ubiquitination, promoting the formation of 'Lys-63'-linked ubiquitin conjugates. This leads to concentrate ubiquitinated histones H2A and H2AX at DNA lesions to the threshold required for recruitment of TP53BP1 and BRCA1. Also recruited at DNA interstrand cross-links (ICLs) sites and promotes accumulation of 'Lys-63'-linked ubiquitination of histones H2A and H2AX, leading to recruitment of FAAP20 and Fanconi anemia (FA) complex, followed by interstrand cross-link repair. H2A ubiquitination also mediates the ATM-dependent transcriptional silencing at regions flanking DSBs in cis, a mechanism to avoid collision between transcription and repair intermediates. Also involved in class switch recombination in immune system, via its role in regulation of DSBs repair. Following DNA damage, promotes the ubiquitination and degradation of JMJD2A/KDM4A in collaboration with RNF8, leading to unmask H4K20me2 mark and promote the recruitment of TP53BP1 at DNA damage sites. Not able to initiate 'Lys-63'-linked ubiquitination in vitro; possibly due to partial occlusion of the UBE2N/UBC13-binding region. Catalyzes monoubiquitination of 'Lys-13' and 'Lys-15' of nucleosomal histone H2A (H2AK13Ub and H2AK15Ub, respectively). The polypeptide is E3 ubiquitin-protein ligase RNF168 (Bos taurus (Bovine)).